The following is a 172-amino-acid chain: 3-phenylpropionate/cinnamic acid dioxygenase subunit beta (172 aa).

This sequence belongs to the bacterial ring-hydroxylating dioxygenase beta subunit family. As to quaternary structure, this dioxygenase system consists of four proteins: the two subunits of the hydroxylase component (HcaE and HcaF), a ferredoxin (HcaC) and a ferredoxin reductase (HcaD).

The catalysed reaction is 3-phenylpropanoate + NADH + O2 + H(+) = 3-(cis-5,6-dihydroxycyclohexa-1,3-dien-1-yl)propanoate + NAD(+). It carries out the reaction (E)-cinnamate + NADH + O2 + H(+) = (2E)-3-(cis-5,6-dihydroxycyclohexa-1,3-dien-1-yl)prop-2-enoate + NAD(+). Its pathway is aromatic compound metabolism; 3-phenylpropanoate degradation. Its function is as follows. Part of the multicomponent 3-phenylpropionate dioxygenase. Converts 3-phenylpropionic acid (PP) and cinnamic acid (CI) into 3-phenylpropionate-dihydrodiol (PP-dihydrodiol) and cinnamic acid-dihydrodiol (CI-dihydrodiol), respectively. This chain is 3-phenylpropionate/cinnamic acid dioxygenase subunit beta, found in Escherichia coli O157:H7.